The following is a 278-amino-acid chain: Bis(5'-nucleosyl)-tetraphosphatase, symmetrical (278 aa).

This sequence belongs to the Ap4A hydrolase family.

The catalysed reaction is P(1),P(4)-bis(5'-adenosyl) tetraphosphate + H2O = 2 ADP + 2 H(+). In terms of biological role, hydrolyzes diadenosine 5',5'''-P1,P4-tetraphosphate to yield ADP. This Nitrosococcus oceani (strain ATCC 19707 / BCRC 17464 / JCM 30415 / NCIMB 11848 / C-107) protein is Bis(5'-nucleosyl)-tetraphosphatase, symmetrical.